We begin with the raw amino-acid sequence, 1397 residues long: DNA-directed RNA polymerase subunit beta' (1397 aa).

Positions 71, 73, 86, and 89 each coordinate Zn(2+). Asp-462, Asp-464, and Asp-466 together coordinate Mg(2+). Zn(2+) contacts are provided by Cys-811, Cys-885, Cys-892, and Cys-895. Positions 1368–1397 (QNRDDKILEDQGGATPTASTEIKEPAEGAA) are disordered. Residues 1388–1397 (EIKEPAEGAA) are compositionally biased toward basic and acidic residues.

It belongs to the RNA polymerase beta' chain family. As to quaternary structure, the RNAP catalytic core consists of 2 alpha, 1 beta, 1 beta' and 1 omega subunit. When a sigma factor is associated with the core the holoenzyme is formed, which can initiate transcription. It depends on Mg(2+) as a cofactor. The cofactor is Zn(2+).

The catalysed reaction is RNA(n) + a ribonucleoside 5'-triphosphate = RNA(n+1) + diphosphate. Its function is as follows. DNA-dependent RNA polymerase catalyzes the transcription of DNA into RNA using the four ribonucleoside triphosphates as substrates. The sequence is that of DNA-directed RNA polymerase subunit beta' from Parvibaculum lavamentivorans (strain DS-1 / DSM 13023 / NCIMB 13966).